The chain runs to 90 residues: Probable Fe(2+)-trafficking protein (90 aa).

It belongs to the Fe(2+)-trafficking protein family.

In terms of biological role, could be a mediator in iron transactions between iron acquisition and iron-requiring processes, such as synthesis and/or repair of Fe-S clusters in biosynthetic enzymes. The chain is Probable Fe(2+)-trafficking protein from Pseudomonas fluorescens (strain ATCC BAA-477 / NRRL B-23932 / Pf-5).